Here is a 162-residue protein sequence, read N- to C-terminus: Endoribonuclease YbeY (162 aa).

Zn(2+) contacts are provided by His117, His121, and His127.

The protein belongs to the endoribonuclease YbeY family. The cofactor is Zn(2+).

The protein resides in the cytoplasm. In terms of biological role, single strand-specific metallo-endoribonuclease involved in late-stage 70S ribosome quality control and in maturation of the 3' terminus of the 16S rRNA. The protein is Endoribonuclease YbeY of Francisella tularensis subsp. tularensis (strain WY96-3418).